The chain runs to 404 residues: Probable pectate lyase 18 (404 aa).

An N-terminal signal peptide occupies residues 1–20; that stretch reads MSTLFFTFSLLLLAPLLVIS. An N-linked (GlcNAc...) asparagine glycan is attached at Asn-37. A disulfide bridge connects residues Cys-159 and Cys-178. An N-linked (GlcNAc...) asparagine glycan is attached at Asn-191. Ca(2+)-binding residues include Asp-200, Asp-202, Asp-224, and Asp-228. Arg-280 is an active-site residue.

The protein belongs to the polysaccharide lyase 1 family. The cofactor is Ca(2+). Predominantly found in the pistil where it is found in the outer five layers of the strands of transmitting tissue within the upper two-thirds of the style. Found at much lower levels in the anthers and vegetative organs.

It localises to the secreted. The catalysed reaction is Eliminative cleavage of (1-&gt;4)-alpha-D-galacturonan to give oligosaccharides with 4-deoxy-alpha-D-galact-4-enuronosyl groups at their non-reducing ends.. Its pathway is glycan metabolism; pectin degradation; 2-dehydro-3-deoxy-D-gluconate from pectin: step 2/5. In terms of biological role, may have a role in the development of the transmitting tissue of the style and/or in the events related to pollination such as some aspect in the facilitation of compatible pollen tube growth. The chain is Probable pectate lyase 18 from Solanum lycopersicum (Tomato).